We begin with the raw amino-acid sequence, 475 residues long: Ubiquilin-like protein (475 aa).

One can recognise a Ubiquitin-like domain in the interval 31–105; it reads TRVIVKTAGN…IYLVIKSKQG (75 aa). 2 disordered regions span residues 113 to 138 and 305 to 325; these read FRDLPTNDPCHRDRNTKGNSSRVHQP and QVQSSPPPPPPSQEQQDQLTQ. Residues 129–138 are compositionally biased toward polar residues; it reads KGNSSRVHQP.

The polypeptide is Ubiquilin-like protein (UBQLNL) (Homo sapiens (Human)).